We begin with the raw amino-acid sequence, 627 residues long: Chaperone protein DnaK (627 aa).

Residue threonine 197 is modified to Phosphothreonine; by autocatalysis. Residues 598–611 (AYAKEQGGQQGAAD) are compositionally biased toward low complexity. Residues 598 to 627 (AYAKEQGGQQGAADAGKKADDDDVIDAEVE) form a disordered region. Positions 618–627 (DDDVIDAEVE) are enriched in acidic residues.

It belongs to the heat shock protein 70 family.

Functionally, acts as a chaperone. The chain is Chaperone protein DnaK from Sulfurovum sp. (strain NBC37-1).